Here is a 223-residue protein sequence, read N- to C-terminus: Regulator of G-protein signaling 19 (223 aa).

The tract at residues methionine 1 to proline 30 is disordered. The span at proline 20 to alanine 29 shows a compositional bias: low complexity. 2 positions are modified to phosphoserine: serine 24 and serine 103. An RGS domain is found at serine 96–leucine 212. Serine 157 is subject to Phosphoserine; by MAPK1 and MAPK3. The tract at residues leucine 213–alanine 223 is interaction with GIPC.

Interacts with GIPC PDZ domain. Interacts with GNAO1. In terms of processing, fatty acylated. Heavily palmitoylated in the cysteine string motif. Post-translationally, phosphorylated, mainly on serine residues.

The protein localises to the membrane. Its function is as follows. Inhibits signal transduction by increasing the GTPase activity of G protein alpha subunits thereby driving them into their inactive GDP-bound form. Binds to G-alpha subfamily 1 members, with the order G(i)a3 &gt; G(i)a1 &gt; G(o)a &gt;&gt; G(z)a/G(i)a2. Activity on G(z)-alpha is inhibited by phosphorylation and palmitoylation of the G-protein. In Bos taurus (Bovine), this protein is Regulator of G-protein signaling 19 (RGS19).